We begin with the raw amino-acid sequence, 589 residues long: Netrin-G2 (589 aa).

An N-terminal signal peptide occupies residues 1-17 (MLRLLALFLHCLPLVSG). 3 disulfides stabilise this stretch: C22–C39, C61–C81, and C69–C77. Residues 35-286 (EFYACQPKVM…AISNIEVIGR (252 aa)) form the Laminin N-terminal domain. Positions 69-88 (CSHENPYLCSNECDASNPDL) are NGL discriminant loop I. Residues N122 and N128 are each glycosylated (N-linked (GlcNAc...) asparagine). An intrachain disulfide couples C171 to C195. Residues 201 to 203 (RWA) form an NGL discriminant loop II region. The tract at residues 264–267 (TYVQ) is NGL discriminant loop III. Cystine bridges form between C287-C296, C289-C305, C307-C316, C319-C344, C413-C422, C415-C433, C436-C445, C448-C466, C469-C481, C471-C487, C489-C498, C501-C511, C516-C529, C523-C535, and C537-C546. Laminin EGF-like domains follow at residues 287 to 346 (CKCN…ACAA), 413 to 468 (CECY…VCIE), and 469 to 513 (CNCN…GCYP). An N-linked (GlcNAc...) asparagine glycan is attached at N310. N455 carries N-linked (GlcNAc...) asparagine glycosylation. N482 is a glycosylation site (N-linked (GlcNAc...) asparagine). A lipid anchor (GPI-anchor amidated glycine) is attached at G566. Residues 567-589 (IVPRPDTLLGCLLLLGLAARLAC) constitute a propeptide, removed in mature form.

In terms of assembly, interacts with LRRC4. In terms of processing, N-glycosylated. As to expression, expression is restricted primarily to neurons of the CNS, particularly in the cerebral cortex, habenular nucleus and superior colliculus. Low levels in lung, kidney, heart and spleen.

It is found in the cell membrane. Functionally, involved in controlling patterning and neuronal circuit formation at the laminar, cellular, subcellular and synaptic levels. Promotes neurite outgrowth of both axons and dendrites. The sequence is that of Netrin-G2 (Ntng2) from Mus musculus (Mouse).